A 379-amino-acid chain; its full sequence is 3-dehydroquinate synthase (379 aa).

NAD(+) is bound by residues 67-72 (SGEKNK), 101-105 (GVVLD), 125-126 (TT), Lys138, and Lys147. 3 residues coordinate Zn(2+): Glu180, His242, and His258.

The protein belongs to the sugar phosphate cyclases superfamily. Dehydroquinate synthase family. NAD(+) serves as cofactor. Requires Co(2+) as cofactor. Zn(2+) is required as a cofactor.

The protein localises to the cytoplasm. The enzyme catalyses 7-phospho-2-dehydro-3-deoxy-D-arabino-heptonate = 3-dehydroquinate + phosphate. It functions in the pathway metabolic intermediate biosynthesis; chorismate biosynthesis; chorismate from D-erythrose 4-phosphate and phosphoenolpyruvate: step 2/7. Its function is as follows. Catalyzes the conversion of 3-deoxy-D-arabino-heptulosonate 7-phosphate (DAHP) to dehydroquinate (DHQ). This Chlamydia abortus (strain DSM 27085 / S26/3) (Chlamydophila abortus) protein is 3-dehydroquinate synthase.